The following is a 433-amino-acid chain: Elongation factor 1-alpha (433 aa).

Residues 5-220 (KPHINVVFIG…ALDMLKPPQL (216 aa)) form the tr-type G domain. The segment at 14-21 (GHVDHGKS) is G1. Position 14–21 (14–21 (GHVDHGKS)) interacts with GTP. Ser21 is a Mg(2+) binding site. A G2 region spans residues 70 to 74 (GVTID). A G3 region spans residues 91-94 (DAPG). Residues 91 to 95 (DAPGH) and 146 to 149 (NKMD) each bind GTP. The tract at residues 146–149 (NKMD) is G4. Residues 186–188 (ASF) form a G5 region.

The protein belongs to the TRAFAC class translation factor GTPase superfamily. Classic translation factor GTPase family. EF-Tu/EF-1A subfamily.

The protein localises to the cytoplasm. It carries out the reaction GTP + H2O = GDP + phosphate + H(+). GTP hydrolase that promotes the GTP-dependent binding of aminoacyl-tRNA to the A-site of ribosomes during protein biosynthesis. The polypeptide is Elongation factor 1-alpha (Nanoarchaeum equitans (strain Kin4-M)).